The following is a 316-amino-acid chain: D-alanine--D-alanine ligase (316 aa).

An ATP-grasp domain is found at Lys-104–Ala-303. An ATP-binding site is contributed by Pro-130–Thr-185. The Mg(2+) site is built by Asp-257, Glu-270, and Asn-272.

The protein belongs to the D-alanine--D-alanine ligase family. It depends on Mg(2+) as a cofactor. The cofactor is Mn(2+).

Its subcellular location is the cytoplasm. The catalysed reaction is 2 D-alanine + ATP = D-alanyl-D-alanine + ADP + phosphate + H(+). Its pathway is cell wall biogenesis; peptidoglycan biosynthesis. Its function is as follows. Cell wall formation. In Bordetella parapertussis (strain 12822 / ATCC BAA-587 / NCTC 13253), this protein is D-alanine--D-alanine ligase.